The following is a 204-amino-acid chain: Large ribosomal subunit protein eL15 (204 aa).

Residues Met161–Phe180 are disordered. Over residues Lys169–Phe180 the composition is skewed to basic residues.

Belongs to the eukaryotic ribosomal protein eL15 family. Component of the large ribosomal subunit.

The protein localises to the cytoplasm. In terms of biological role, component of the large ribosomal subunit. The ribosome is a large ribonucleoprotein complex responsible for the synthesis of proteins in the cell. This Ictalurus punctatus (Channel catfish) protein is Large ribosomal subunit protein eL15 (rpl15).